The sequence spans 512 residues: Chitin synthase regulatory factor 2 (512 aa).

Sel1-like repeat units follow at residues 224–260 (SEAL…DLNH), 261–296 (VQAA…SGQH), 297–333 (VGAM…LEAD), 337–377 (PQAL…KYGL), 378–414 (KDAQ…RKRN), and 415–452 (PEAM…YKNH). Cys509 is modified (cysteine methyl ester). The S-farnesyl cysteine moiety is linked to residue Cys509. The propeptide at 510–512 (IIS) is removed in mature form.

It is found in the membrane. Its function is as follows. Involved in chitin biosynthesis. This chain is Chitin synthase regulatory factor 2 (chr2), found in Schizosaccharomyces pombe (strain 972 / ATCC 24843) (Fission yeast).